We begin with the raw amino-acid sequence, 79 residues long: Secretory calcium-binding phosphoprotein proline-glutamine rich 1 (79 aa).

The first 15 residues, 1–15, serve as a signal peptide directing secretion; it reads MKFLILAGLLSTATA.

Its subcellular location is the secreted. Tooth-associated epithelia protein that may participate in structuring the basal lamina at cell-tooth interface. The sequence is that of Secretory calcium-binding phosphoprotein proline-glutamine rich 1 from Homo sapiens (Human).